The following is a 72-amino-acid chain: Translation initiation factor IF-1 (72 aa).

The 72-residue stretch at 1 to 72 folds into the S1-like domain; the sequence is MAKEEAIEVE…TRGRITYREK (72 aa).

This sequence belongs to the IF-1 family. As to quaternary structure, component of the 30S ribosomal translation pre-initiation complex which assembles on the 30S ribosome in the order IF-2 and IF-3, IF-1 and N-formylmethionyl-tRNA(fMet); mRNA recruitment can occur at any time during PIC assembly.

It localises to the cytoplasm. Its function is as follows. One of the essential components for the initiation of protein synthesis. Stabilizes the binding of IF-2 and IF-3 on the 30S subunit to which N-formylmethionyl-tRNA(fMet) subsequently binds. Helps modulate mRNA selection, yielding the 30S pre-initiation complex (PIC). Upon addition of the 50S ribosomal subunit IF-1, IF-2 and IF-3 are released leaving the mature 70S translation initiation complex. The chain is Translation initiation factor IF-1 from Syntrophotalea carbinolica (strain DSM 2380 / NBRC 103641 / GraBd1) (Pelobacter carbinolicus).